Reading from the N-terminus, the 415-residue chain is Exodeoxyribonuclease 7 large subunit (415 aa).

Belongs to the XseA family. Heterooligomer composed of large and small subunits.

It is found in the cytoplasm. It carries out the reaction Exonucleolytic cleavage in either 5'- to 3'- or 3'- to 5'-direction to yield nucleoside 5'-phosphates.. Its function is as follows. Bidirectionally degrades single-stranded DNA into large acid-insoluble oligonucleotides, which are then degraded further into small acid-soluble oligonucleotides. The chain is Exodeoxyribonuclease 7 large subunit from Mycobacterium bovis (strain ATCC BAA-935 / AF2122/97).